The sequence spans 376 residues: E3 ubiquitin-protein ligase RNF133 (376 aa).

The 103-residue stretch at 65-167 folds into the PA domain; the sequence is SSTLKRVAGV…LKGTEIFHLI (103 aa). Residues 190–210 traverse the membrane as a helical segment; the sequence is YLVSFVIVTTATLAYFIFYHI. The segment at 256–297 adopts an RING-type; atypical zinc-finger fold; sequence CVICFERYKPNDIVRILTCKHFFHKNCIDPWILPHGTCPICK. The interval 327–376 is disordered; it reads ETLSPSEEETNNEVSPAGTSDKVIHVEENPTSQNNDIQPHSVVEDVHPSP. Residues 355-364 are compositionally biased toward polar residues; that stretch reads NPTSQNNDIQ.

As to quaternary structure, interacts with E3 ligase UBE2J1. Auto-ubiquitinated. As to expression, expression is testis-specific.

Its subcellular location is the endoplasmic reticulum membrane. The enzyme catalyses S-ubiquitinyl-[E2 ubiquitin-conjugating enzyme]-L-cysteine + [acceptor protein]-L-lysine = [E2 ubiquitin-conjugating enzyme]-L-cysteine + N(6)-ubiquitinyl-[acceptor protein]-L-lysine.. It participates in protein modification; protein ubiquitination. Its function is as follows. Has E3 ubiquitin-protein ligase activity. Plays a role in male fecundity through the interaction with the E2 ubituitin-protein ligase UBE2J1. The chain is E3 ubiquitin-protein ligase RNF133 from Homo sapiens (Human).